A 322-amino-acid chain; its full sequence is Acetyl-coenzyme A carboxylase carboxyl transferase subunit beta (322 aa).

Residues 24 to 293 (LWIKCPDTGQ…PAVEEIAASD (270 aa)) enclose the CoA carboxyltransferase N-terminal domain.

Belongs to the AccD/PCCB family. Acetyl-CoA carboxylase is a heterohexamer composed of biotin carboxyl carrier protein (AccB), biotin carboxylase (AccC) and two subunits each of ACCase subunit alpha (AccA) and ACCase subunit beta (AccD).

It localises to the cytoplasm. It carries out the reaction N(6)-carboxybiotinyl-L-lysyl-[protein] + acetyl-CoA = N(6)-biotinyl-L-lysyl-[protein] + malonyl-CoA. Its pathway is lipid metabolism; malonyl-CoA biosynthesis; malonyl-CoA from acetyl-CoA: step 1/1. Its function is as follows. Component of the acetyl coenzyme A carboxylase (ACC) complex. Biotin carboxylase (BC) catalyzes the carboxylation of biotin on its carrier protein (BCCP) and then the CO(2) group is transferred by the transcarboxylase to acetyl-CoA to form malonyl-CoA. This is Acetyl-coenzyme A carboxylase carboxyl transferase subunit beta from Rhodopseudomonas palustris (strain BisB5).